Consider the following 2134-residue polypeptide: Genome polyprotein (2134 aa).

The Cytoplasmic portion of the chain corresponds to 1-1377; it reads MSKLFSTVGK…WLFEKIKTSK (1377 aa). An LRAT domain is found at 781-882; sequence IVSCSGEKAK…GDYGTKEGEK (102 aa). Residues His-791 and His-802 contribute to the active site. Cys-863 acts as the Acyl-thioester intermediate in catalysis. The SF3 helicase domain maps to 1127 to 1289; sequence LNKLGRLDKP…EEFSTHAMLD (163 aa). 1153 to 1160 is a binding site for ATP; it reads GNRGGGKS. Residues 1378–1392 lie within the membrane without spanning it; that stretch reads WYILGCVGAVLSVSV. Residues 1393–2134 lie on the Cytoplasmic side of the membrane; that stretch reads LGVFAYHMIK…VKYRFIDDSF (742 aa). Tyr-1415 is modified (O-(5'-phospho-RNA)-tyrosine). Residues 1431-1643 form the Peptidase C3 domain; sequence DAQSVVDISN…ITKEMIEEML (213 aa). Catalysis depends on for protease 3C activity residues His-1477, Asp-1515, and Cys-1603. The 122-residue stretch at 1880 to 2001 folds into the RdRp catalytic domain; sequence DLVVGLDFSN…CIKKEYLDQK (122 aa).

It belongs to the picornaviridae polyprotein family. Post-translationally, specific enzymatic cleavages by the viral protease in vivo yield a variety of precursors and mature proteins. During virion maturation, non-infectious particles are rendered infectious following cleavage of VP0. This maturation cleavage is followed by a conformational change of the particle. In terms of processing, VPg is uridylylated by the polymerase and is covalently linked to the 5'-end of genomic RNA. This uridylylated form acts as a nucleotide-peptide primer for the polymerase.

It localises to the virion. The protein resides in the host cytoplasm. The protein localises to the host cytoplasmic vesicle membrane. It carries out the reaction RNA(n) + a ribonucleoside 5'-triphosphate = RNA(n+1) + diphosphate. The catalysed reaction is a ribonucleoside 5'-triphosphate + H2O = a ribonucleoside 5'-diphosphate + phosphate + H(+). The enzyme catalyses Selective cleavage of Gln-|-Gly bond in the poliovirus polyprotein. In other picornavirus reactions Glu may be substituted for Gln, and Ser or Thr for Gly.. Capsid proteins VP1, VP2, and VP3 form a closed capsid enclosing the viral positive strand RNA genome. All these proteins contain a beta-sheet structure called beta-barrel jelly roll. Together they form an icosahedral capsid (T=3) composed of 60 copies of each VP1, VP2, and VP3, with a diameter of approximately 300 Angstroms. VP1 is situated at the 12 fivefold axes, whereas VP2 and VP3 are located at the quasi-sixfold axes. Its function is as follows. VP0 precursor is a component of immature procapsids. The N-terminal domain of VP0, protein VP4, is needed for the assembly of 12 pentamers into the icosahedral structure. Unlike other picornaviruses, AEV VP4 may not be myristoylated. Functionally, protein 2B and 2BC precursor affect membrane integrity and cause an increase in membrane permeability. In terms of biological role, associates with and induces structural rearrangements of intracellular membranes. It displays RNA-binding, nucleotide binding and NTPase activities. Protein 3A, via its hydrophobic domain, serves as membrane anchor. Its function is as follows. Protein 3B is covalently linked to the 5'-end of both the positive-strand and negative-strand genomic RNAs. It acts as a genome-linked replication primer. Functionally, cysteine protease that generates mature viral proteins from the precursor polyprotein. In addition to its proteolytic activity, it binds to viral RNA, and thus influences viral genome replication. RNA and substrate bind cooperatively to the protease. In terms of biological role, RNA-directed RNA polymerase 3D-POL replicates genomic and antigenomic RNA by recognizing replications specific signals. This chain is Genome polyprotein, found in Avian encephalomyelitis virus (strain Calnek vaccine) (AEV).